Here is a 910-residue protein sequence, read N- to C-terminus: MGTPKAQHPPPSQLLLLILLSCAWIEGLPLKEDEMMPEPGSETPTVASEDLAELLHGALLRKGPEIGFLPGSDPDPTLATPPAGQTLAAPSLPRATEPGTGPLTTAVTPKGVRGAGPTAPELLTPPPGTTAPPPPGPASPVPPLRPEGGEEETTTTIITTTTVTTTVTSPVLCNNNISEGEGFVESPDLGSTASRSVELLDCTYSIHVYPGYGIEIQVQTLNLSQEEELLVLAGGGSPGLAPRLLANSSMLGEGQVLRSPTNRLLLHFQSPRVPRGNGFRIHYQAYLLSCGFPPRPAHGDVSVTDLHPGGTATFHCDSGYQLQGEETLICLNGTRPAWTGEPPSCTASCGGTIHNATLGRIVSPEPGGAAGPNLTCRWVIEAAEGRRLHLHFERVSLDEDNDRLMVRSGGSPLSPVIYDSDMDDVPERGLISDAQSLYVELLSETPANPLLLSLRFEAFEEDRCFPPFLAHGNVTTTDPEFHPGALATFSCLPGYALEPPGPPNAIECVDPTEPHWNDTEPACKAMCGGELSEPAGVVLSPDWPQSYSPGQDCVWGLHVQEEKRILLQVEILNVREGDMLTLFDGDGPSARVLAQLRGPQPRRRLLSSGPDLTLQFQAPPGPPNPGLGQGFVLHFKEVPRNDTCPELPPPEWGWRTASHGDLIRGTVLTYQCEPGYELLGSDILTCQWDLSWSAAPPACQKIMTCADPGEITNGHRTASDAGFPVGSHVQYRCLPGYSLEGAAVLTCYSRDTGTPKWSDRVPKCALKYEPCLNPGVPENGYQTLYKHHYQAGESLRFFCYEGFELIGEVTITCVPGHPSQWTSQPPLCKVTQTTDPSRQLEGGNLALAILLPLGLVIVLGIGVYIYYTKLQGKSLFGFSGSHSYSPITVESDFSNPLYEAGDTREYEVSI.

The N-terminal stretch at 1 to 27 is a signal peptide; sequence MGTPKAQHPPPSQLLLLILLSCAWIEG. Residues 28-844 lie on the Extracellular side of the membrane; sequence LPLKEDEMMP…DPSRQLEGGN (817 aa). Positions 70-152 are disordered; sequence PGSDPDPTLA…PLRPEGGEEE (83 aa). Residues 123 to 145 show a composition bias toward pro residues; the sequence is LTPPPGTTAPPPPGPASPVPPLR. The cysteines at positions 173 and 202 are disulfide-linked. The CUB 1 domain occupies 173–286; the sequence is CNNNISEGEG…NGFRIHYQAY (114 aa). N222 carries an N-linked (GlcNAc...) asparagine glycan. Positions 288–347 constitute a Sushi 1 domain; that stretch reads LSCGFPPRPAHGDVSVTDLHPGGTATFHCDSGYQLQGEETLICLNGTRPAWTGEPPSCTA. 12 disulfide bridges follow: C290–C330, C316–C345, C349–C376, C464–C508, C491–C523, C527–C553, C644–C686, C672–C699, C705–C747, C733–C764, C771–C813, and C799–C828. N-linked (GlcNAc...) asparagine glycans are attached at residues N332, N373, N473, and N517. In terms of domain architecture, CUB 2 spans 349–459; sequence CGGTIHNATL…LLLSLRFEAF (111 aa). One can recognise a Sushi 2 domain in the interval 462 to 525; that stretch reads DRCFPPFLAH…WNDTEPACKA (64 aa). In terms of domain architecture, CUB 3 spans 527 to 638; that stretch reads CGGELSEPAG…QGFVLHFKEV (112 aa). Sushi domains lie at 642–701, 703–766, and 769–830; these read DTCP…ACQK, MTCA…KCAL, and EPCL…LCKV. A helical membrane pass occupies residues 845–865; that stretch reads LALAILLPLGLVIVLGIGVYI. Topologically, residues 866–910 are cytoplasmic; it reads YYTKLQGKSLFGFSGSHSYSPITVESDFSNPLYEAGDTREYEVSI.

This sequence belongs to the SEZ6 family. In terms of tissue distribution, expressed exclusively in the brain, predominantly in the neurons. Wide expression in the gray matter of the brain with high levels in the olfactory bulb, anterior olfactory nuclei, hippocampal formation and cerebellar cortex. Detected diffusely and weakly in the white matter, such as the corpus callosum and cerebellar medulla. In the cerebellar cortex, intensely expressed in Purkinje cells (PC) and granule cells. Detected also in interneurons in the molecular layer. Up-regulated at two weeks after birth.

The protein resides in the cell membrane. It is found in the endoplasmic reticulum membrane. May contribute to specialized endoplasmic reticulum functions in neurons. This chain is Seizure 6-like protein 2 (Sez6l2), found in Mus musculus (Mouse).